The sequence spans 322 residues: Large ribosomal subunit protein uL29m (322 aa).

The tract at residues M1–N44 is disordered.

Belongs to the universal ribosomal protein uL29 family. Component of the mitochondrial large ribosomal subunit. Mature mitochondrial ribosomes consist of a small (37S) and a large (54S) subunit. The 37S subunit contains at least 33 different proteins and 1 molecule of RNA (15S). The 54S subunit contains at least 45 different proteins and 1 molecule of RNA (21S).

It is found in the mitochondrion. This chain is Large ribosomal subunit protein uL29m (MRPL4), found in Vanderwaltozyma polyspora (strain ATCC 22028 / DSM 70294 / BCRC 21397 / CBS 2163 / NBRC 10782 / NRRL Y-8283 / UCD 57-17) (Kluyveromyces polysporus).